We begin with the raw amino-acid sequence, 926 residues long: Disease resistance protein RPM1 (926 aa).

The tract at residues I10–L45 is leucine-zipper. The NB-ARC domain occupies D153–G467. Residue G200–T207 coordinates ATP. LRR repeat units follow at residues L561–L580, N581–M603, N605–K625, L626–L649, L686–Q707, L708–I731, T756–T777, L778–R804, F825–M836, K837–A859, and L876–R900.

Belongs to the disease resistance NB-LRR family. As to quaternary structure, interacts directly with RIN4 via its N-terminal region. Interacts (via N-terminus) with RIN2 and RIN3 (via C-terminus). Interacts with TIP49A, a protein known to interact with the TATA binding protein complex (TBP). Binds to MORC1/CRT1. Interacts, via its NB-ARC domain, with RIN13.

The protein resides in the endomembrane system. It localises to the cell membrane. Disease resistance (R) protein that specifically recognizes the AvrRpm1 type III effector avirulence protein from Pseudomonas syringae. Resistance proteins guard the plant against pathogens that contain an appropriate avirulence protein via an indirect interaction with this avirulence protein. That triggers a defense system including the hypersensitive response (HR), which restricts the pathogen growth. Acts via its interaction with RIN4, and probably triggers the plant resistance when RIN4 is phosphorylated by AvrRpm1. It is then degraded at the onset of the hypersensitive response. In Arabidopsis thaliana (Mouse-ear cress), this protein is Disease resistance protein RPM1.